The chain runs to 349 residues: MDMDNLTWLHGKPKASGVLKANPEDFVVVEDLGFEPDGEGEHLLVRIRKHGCNTQFVADYLARFAKIHPRLVSYAGLKDRHAVTEQWFCLHLPGKEAPDLSTFELEGCEVLESVRQKRKLRIGSLKGNAFTLVLRHITDNQDVEQRLQQIAAHGVPNYFGSQRFGRGGNNLVLARLWANNEIRVKERSKRSFYLSASRSAMFNLISSDRLAQQQATTVLEGDALQLSGRGSWFVAAADELALLQQRVDAGELNITAPLPGDGELGTQGAALAFEQACLADQTELLALIKRERVEGARRAILLKPQNIAWNWWDEVTLELSFWLPAGSFATSVVREIMNQDNADAADIAE.

Phe26 lines the substrate pocket. The Nucleophile role is filled by Asp79. Asn128 is a substrate binding site. The TRUD domain maps to 154–302 (GVPNYFGSQR…VEGARRAILL (149 aa)). Residue Phe328 participates in substrate binding.

This sequence belongs to the pseudouridine synthase TruD family.

The catalysed reaction is uridine(13) in tRNA = pseudouridine(13) in tRNA. Its function is as follows. Responsible for synthesis of pseudouridine from uracil-13 in transfer RNAs. The chain is tRNA pseudouridine synthase D from Yersinia enterocolitica serotype O:8 / biotype 1B (strain NCTC 13174 / 8081).